The chain runs to 199 residues: uncharacterized protein (199 aa).

6 helical membrane-spanning segments follow: residues 1 to 21 (MEQFYYYWSMWFLWVLTTFIF), 28 to 48 (IAVSVFILTNIILSIHDIALY), 51 to 71 (LNAAYLMFFVCGCVYAGYLGM), 83 to 103 (LVAAYAFVYLFALYDPVWFII), 127 to 147 (QLVLFVLGMCQGELVYSFVIQ), and 154 to 174 (AVGGFQWLNACSAGMILLFGI).

The protein resides in the cell membrane. This is an uncharacterized protein from Bacillus subtilis (strain 168).